We begin with the raw amino-acid sequence, 245 residues long: 8-amino-3,8-dideoxy-manno-octulosonate cytidylyltransferase (245 aa).

This sequence belongs to the KdsB family.

It localises to the cytoplasm. It carries out the reaction 8-amino-3,8-dideoxy-alpha-D-manno-octulosonate + CTP = CMP-8-amino-3,8-dideoxy-alpha-D-manno-oct-2-ulosonate + diphosphate. It participates in bacterial outer membrane biogenesis; lipopolysaccharide biosynthesis. Activates KDO8N (a required 8-carbon sugar) for incorporation into bacterial lipopolysaccharide in the Shewanella genus. The polypeptide is 8-amino-3,8-dideoxy-manno-octulosonate cytidylyltransferase (Shewanella woodyi (strain ATCC 51908 / MS32)).